We begin with the raw amino-acid sequence, 415 residues long: Serine/threonine transporter SstT (415 aa).

Transmembrane regions (helical) follow at residues 23-43, 47-67, 85-105, 144-164, 181-201, 220-240, 293-313, and 333-353; these read ILIG…AAIA, LGTL…LMLV, ILFL…LFSF, ALLN…GFAL, AVTF…FGLV, LLVL…LLVF, IPLG…VLTL, and VVAS…LLLI.

It belongs to the dicarboxylate/amino acid:cation symporter (DAACS) (TC 2.A.23) family.

Its subcellular location is the cell inner membrane. It catalyses the reaction L-serine(in) + Na(+)(in) = L-serine(out) + Na(+)(out). The enzyme catalyses L-threonine(in) + Na(+)(in) = L-threonine(out) + Na(+)(out). Functionally, involved in the import of serine and threonine into the cell, with the concomitant import of sodium (symport system). The sequence is that of Serine/threonine transporter SstT from Klebsiella pneumoniae subsp. pneumoniae (strain ATCC 700721 / MGH 78578).